The chain runs to 86 residues: Anti-adapter protein IraP (86 aa).

Residues 1-36 (MKNLIAELLFKLAQKEEESKELCAQVEALEIIVTAM) adopt a coiled-coil conformation.

Belongs to the IraP family. In terms of assembly, interacts with RssB.

The protein localises to the cytoplasm. In terms of biological role, inhibits RpoS proteolysis by regulating RssB activity, thereby increasing the stability of the sigma stress factor RpoS especially during phosphate starvation, but also in stationary phase and during nitrogen starvation. Its effect on RpoS stability is due to its interaction with RssB, which probably blocks the interaction of RssB with RpoS, and the consequent delivery of the RssB-RpoS complex to the ClpXP protein degradation pathway. The protein is Anti-adapter protein IraP of Escherichia coli (strain SE11).